A 201-amino-acid chain; its full sequence is Small ribosomal subunit protein uS10m (201 aa).

It belongs to the universal ribosomal protein uS10 family. In terms of assembly, component of the mitochondrial small ribosomal subunit (mt-SSU). Mature mammalian 55S mitochondrial ribosomes consist of a small (28S) and a large (39S) subunit. The 28S small subunit contains a 12S ribosomal RNA (12S mt-rRNA) and 30 different proteins. The 39S large subunit contains a 16S rRNA (16S mt-rRNA), a copy of mitochondrial valine transfer RNA (mt-tRNA(Val)), which plays an integral structural role, and 52 different proteins.

Its subcellular location is the mitochondrion. The protein is Small ribosomal subunit protein uS10m (MRPS10) of Homo sapiens (Human).